The following is a 111-amino-acid chain: Magnetosome protein MamF (111 aa).

The Cytoplasmic portion of the chain corresponds to 1–17; that stretch reads MAETILIETKTAGGNCR. The helical transmembrane segment at 18-38 threads the bilayer; it reads SYLMAGASYLGILCFVPLLMS. At 39–50 the chain is on the lumenal side; sequence RDDEYVYFHAKQ. Residues 51 to 71 form a helical membrane-spanning segment; the sequence is GLVLWMWSILAMFALHLPGIG. A topological domain (cytoplasmic) is located at residue Lys72. Residues 73–93 traverse the membrane as a helical segment; the sequence is WLFGFSSMGVLMLSVVGLVSV. Residues 94–111 lie on the Lumenal side of the membrane; sequence ALRRTWRLPLISHVVALI.

This sequence belongs to the magnetosome MamF/MmsF protein family. As to quaternary structure, may form homooligomers. Subject to cleavage or degradation; identified by N-terminal sequencing of proteins that are about 103, 92 and 15 kDa in size.

Its subcellular location is the magnetosome membrane. Functionally, plays a role in regulating magnetite crystal size; partially redundant function with MmsF. In Magnetospirillum gryphiswaldense (strain DSM 6361 / JCM 21280 / NBRC 15271 / MSR-1), this protein is Magnetosome protein MamF.